The sequence spans 459 residues: Argininosuccinate lyase (459 aa).

Belongs to the lyase 1 family. Argininosuccinate lyase subfamily.

The protein localises to the cytoplasm. The enzyme catalyses 2-(N(omega)-L-arginino)succinate = fumarate + L-arginine. It participates in amino-acid biosynthesis; L-arginine biosynthesis; L-arginine from L-ornithine and carbamoyl phosphate: step 3/3. This is Argininosuccinate lyase from Lactococcus lactis subsp. lactis (strain IL1403) (Streptococcus lactis).